The primary structure comprises 854 residues: Discoidin domain-containing receptor 2 (854 aa).

The N-terminal stretch at 1–21 (MIPIPRMPLVLLLLLLILGSA) is a signal peptide. The Extracellular segment spans residues 22 to 399 (KAQVNPAICR…MLKVDDSNTR (378 aa)). The region spanning 30-185 (CRYPLGMSGG…VCMRVELYGC (156 aa)) is the F5/8 type C domain. 2 disulfides stabilise this stretch: cysteine 30/cysteine 185 and cysteine 73/cysteine 177. N-linked (GlcNAc...) asparagine glycans are attached at residues asparagine 121, asparagine 213, asparagine 261, asparagine 280, and asparagine 372. Residues 400 to 421 (ILIGCLVAIIFILLAIIVIILW) traverse the membrane as a helical segment. Over 422–854 (RQFWQKMLEK…HLLLLQQGAE (433 aa)) the chain is Cytoplasmic. The disordered stretch occupies residues 452–471 (SMFNNNRSSSPSEQESNSTY). Residues 455-469 (NNNRSSSPSEQESNS) are compositionally biased toward low complexity. Tyrosine 471 bears the Phosphotyrosine; by SRC and autocatalysis mark. One can recognise a Protein kinase domain in the interval 563–848 (LAFKEKLGEG…PSFQEIHLLL (286 aa)). ATP-binding positions include 569–577 (LGEGQFGEV) and lysine 608. Aspartate 709 serves as the catalytic Proton acceptor. Phosphotyrosine; by SRC and autocatalysis is present on residues tyrosine 735, tyrosine 739, and tyrosine 740.

This sequence belongs to the protein kinase superfamily. Tyr protein kinase family. Insulin receptor subfamily. Binds hydroxyproline-rich sequence motifs in fibrillar, glycosylated collagen, such as the GQOGVMGFO motif, where O stands for hydroxyproline. Interacts with SRC. Interacts (tyrosine phosphorylated) with SHC1. Post-translationally, N-glycosylated. In terms of processing, tyrosine phosphorylated in response to collagen binding. Phosphorylated by SRC; this is required for activation and subsequent autophosphorylation on additional tyrosine residues. In terms of tissue distribution, widely expressed. Detected in lung, ovary, skin and in testis Leydig cells (at protein level). Widely expressed. Detected at high levels in heart, lung, skeletal muscle, central nervous system (CNS) and kidney, and at lower levels in brain and testis. Detected in chondrocytes in tibia growth plates of young mice.

The protein localises to the cell membrane. It catalyses the reaction L-tyrosyl-[protein] + ATP = O-phospho-L-tyrosyl-[protein] + ADP + H(+). Present in an inactive state in the absence of collagen binding and phosphorylation by SRC. Tyrosine phosphorylation enhances the affinity for ATP and the catalytic activity. Its function is as follows. Tyrosine kinase that functions as a cell surface receptor for fibrillar collagen and regulates cell differentiation, remodeling of the extracellular matrix, cell migration and cell proliferation. Required for normal bone development. Regulates osteoblast differentiation and chondrocyte maturation via a signaling pathway that involves MAP kinases and leads to the activation of the transcription factor RUNX2. Regulates remodeling of the extracellular matrix by up-regulation of the collagenases MMP1, MMP2 and MMP13, and thereby facilitates cell migration and tumor cell invasion. Promotes fibroblast migration and proliferation, and thereby contributes to cutaneous wound healing. The sequence is that of Discoidin domain-containing receptor 2 (Ddr2) from Mus musculus (Mouse).